Reading from the N-terminus, the 295-residue chain is Large ribosomal subunit protein uL15m (295 aa).

The transit peptide at 1–20 (MAGTARGCGTSLDLLRSLPR) directs the protein to the mitochondrion. The segment at 21-67 (VSLANLKPSPNSRKRERRPRDRRRGRKCGRGHKGERQRGTRPRLGFE) is disordered. The span at 32–51 (SRKRERRPRDRRRGRKCGRG) shows a compositional bias: basic residues.

It belongs to the universal ribosomal protein uL15 family. In terms of assembly, component of the mitochondrial ribosome large subunit (39S) which comprises a 16S rRNA and about 50 distinct proteins.

The protein localises to the mitochondrion. The protein is Large ribosomal subunit protein uL15m (Mrpl15) of Mus musculus (Mouse).